We begin with the raw amino-acid sequence, 141 residues long: Hemoglobin subunit alpha-D (141 aa).

The Globin domain maps to 1 to 141 (MLNHDEKQLI…VSAVLAEKYR (141 aa)). Heme b contacts are provided by His58 and His87.

It belongs to the globin family. In terms of assembly, heterotetramer of two alpha-D chains and two beta chains. Red blood cells.

In terms of biological role, involved in oxygen transport from the lung to the various peripheral tissues. This chain is Hemoglobin subunit alpha-D (HBAD), found in Chrysemys picta bellii (Western painted turtle).